A 586-amino-acid polypeptide reads, in one-letter code: Glutamate--tRNA ligase (586 aa).

The interval 84-111 is disordered; the sequence is LTDIESEDTTDTYDLPSLPGVSDDEPTQ. Over residues 85-94 the composition is skewed to acidic residues; sequence TDIESEDTTD. A 'HIGH' region motif is present at residues 119-129; that stretch reads PNPNGPWHIGH.

This sequence belongs to the class-I aminoacyl-tRNA synthetase family. Glutamate--tRNA ligase type 2 subfamily.

Its subcellular location is the cytoplasm. The enzyme catalyses tRNA(Glu) + L-glutamate + ATP = L-glutamyl-tRNA(Glu) + AMP + diphosphate. Catalyzes the attachment of glutamate to tRNA(Glu) in a two-step reaction: glutamate is first activated by ATP to form Glu-AMP and then transferred to the acceptor end of tRNA(Glu). The sequence is that of Glutamate--tRNA ligase from Haloquadratum walsbyi (strain DSM 16790 / HBSQ001).